A 731-amino-acid polypeptide reads, in one-letter code: Fatty acid oxidation complex subunit alpha (731 aa).

Residues 15 to 204 are enoyl-CoA hydratase; sequence TEKTSAFSLT…RQGLVDEAVP (190 aa). A 3-hydroxyacyl-CoA dehydrogenase region spans residues 320-729; the sequence is KPIHRVGILG…FYPPADKDNS (410 aa).

The protein in the N-terminal section; belongs to the enoyl-CoA hydratase/isomerase family. It in the central section; belongs to the 3-hydroxyacyl-CoA dehydrogenase family. In terms of assembly, heterotetramer of two alpha chains (FadJ) and two beta chains (FadI).

It is found in the cytoplasm. The catalysed reaction is a (3S)-3-hydroxyacyl-CoA = a (2E)-enoyl-CoA + H2O. It carries out the reaction a 4-saturated-(3S)-3-hydroxyacyl-CoA = a (3E)-enoyl-CoA + H2O. The enzyme catalyses a (3S)-3-hydroxyacyl-CoA + NAD(+) = a 3-oxoacyl-CoA + NADH + H(+). It catalyses the reaction (3S)-3-hydroxybutanoyl-CoA = (3R)-3-hydroxybutanoyl-CoA. It participates in lipid metabolism; fatty acid beta-oxidation. Catalyzes the formation of a hydroxyacyl-CoA by addition of water on enoyl-CoA. Also exhibits 3-hydroxyacyl-CoA epimerase and 3-hydroxyacyl-CoA dehydrogenase activities. The polypeptide is Fatty acid oxidation complex subunit alpha (Pectobacterium atrosepticum (strain SCRI 1043 / ATCC BAA-672) (Erwinia carotovora subsp. atroseptica)).